We begin with the raw amino-acid sequence, 639 residues long: CREB3 regulatory factor (639 aa).

The segment at 302-422 (PLPQEGPGSL…SVEDLKEVTS (121 aa)) is disordered. Positions 310-328 (SLAAGESSSLSASTSVSDS) are enriched in low complexity. A compositionally biased stretch (polar residues) spans 339 to 351 (LFVSDNLGEQPTK). Residues 355 to 370 (EEDEEDEEDVDDEDHD) show a composition bias toward acidic residues. Residues 371 to 380 (EGFGSEHELS) show a composition bias toward basic and acidic residues. Over residues 381–401 (ENEEEEEEEEDYEDDKDDDIS) the composition is skewed to acidic residues. One can recognise a bZIP domain in the interval 521–584 (TARPRSRKEK…VNRVQNPRDE (64 aa)). The tract at residues 523–532 (RPRSRKEKNK) is basic motif. Residues 533-540 (LASRACRL) form a leucine-zipper region.

This sequence belongs to the bZIP family. CREBRF subfamily. As to quaternary structure, interacts (via leucine-zipper domain) with CREB3 (via leucine-zipper domain); the interaction promotes CREB3 degradation. Post-translationally, probably degraded by the proteasome.

It localises to the nucleus. Acts as a negative regulator of the endoplasmic reticulum stress response or unfolded protein response (UPR). Represses the transcriptional activity of CREB3 during the UPR. Recruits CREB3 into nuclear foci. The chain is CREB3 regulatory factor (CREBRF) from Homo sapiens (Human).